Consider the following 171-residue polypeptide: Ribosome maturation factor RimM (171 aa).

Positions 97–169 constitute a PRC barrel domain; sequence DGEFYYHEII…RVDVDIMEGL (73 aa).

This sequence belongs to the RimM family. Binds ribosomal protein uS19.

The protein localises to the cytoplasm. In terms of biological role, an accessory protein needed during the final step in the assembly of 30S ribosomal subunit, possibly for assembly of the head region. Essential for efficient processing of 16S rRNA. May be needed both before and after RbfA during the maturation of 16S rRNA. It has affinity for free ribosomal 30S subunits but not for 70S ribosomes. This Lactococcus lactis subsp. cremoris (strain MG1363) protein is Ribosome maturation factor RimM.